Consider the following 128-residue polypeptide: Protein C10 (128 aa).

The protein belongs to the UPF0456 family.

It is found in the cytoplasm. This chain is Protein C10, found in Xenopus tropicalis (Western clawed frog).